The primary structure comprises 324 residues: Phospho-N-acetylmuramoyl-pentapeptide-transferase (324 aa).

10 consecutive transmembrane segments (helical) span residues 5-25 (GLLV…PLFI), 52-72 (PTMG…IMAI), 77-97 (LGAE…IGFL), 122-142 (VIAI…YIMI), 149-169 (FELG…GSNA), 176-196 (LDGL…IIAV), 201-221 (FGVA…LVFN), 227-247 (VFMG…VAIL), 253-273 (LLVI…IQVI), and 302-322 (VVVT…YIGV).

This sequence belongs to the glycosyltransferase 4 family. MraY subfamily. Requires Mg(2+) as cofactor.

It localises to the cell membrane. The catalysed reaction is UDP-N-acetyl-alpha-D-muramoyl-L-alanyl-gamma-D-glutamyl-meso-2,6-diaminopimeloyl-D-alanyl-D-alanine + di-trans,octa-cis-undecaprenyl phosphate = di-trans,octa-cis-undecaprenyl diphospho-N-acetyl-alpha-D-muramoyl-L-alanyl-D-glutamyl-meso-2,6-diaminopimeloyl-D-alanyl-D-alanine + UMP. It participates in cell wall biogenesis; peptidoglycan biosynthesis. Catalyzes the initial step of the lipid cycle reactions in the biosynthesis of the cell wall peptidoglycan: transfers peptidoglycan precursor phospho-MurNAc-pentapeptide from UDP-MurNAc-pentapeptide onto the lipid carrier undecaprenyl phosphate, yielding undecaprenyl-pyrophosphoryl-MurNAc-pentapeptide, known as lipid I. The protein is Phospho-N-acetylmuramoyl-pentapeptide-transferase of Bacillus anthracis.